The following is an 821-amino-acid chain: Putative outer membrane usher protein YqiG (821 aa).

An N-terminal signal peptide occupies residues Met-1–Ala-20. Cysteines 798 and 817 form a disulfide.

The protein belongs to the fimbrial export usher family.

It localises to the cell outer membrane. Its function is as follows. May be involved in H(2) production during fermentative growth. Involved in the export and assembly of a fimbrial subunit across the outer membrane. This Escherichia coli (strain K12) protein is Putative outer membrane usher protein YqiG (yqiG).